Consider the following 473-residue polypeptide: MKTLYSLRRFYHVETLFNGTLALAGRDQETTGFAWWAGNARLINLSGKLLGAHVAHAGLIVFWAGAMNLFEVAHFVPEKPMYEQGLILLPHLATLGWGVGPGGEVIDTFPYFVSGVLHLISSAVLGFGGIYHALLGPETLEESFPFFGYVWKDRNKMTTILGIHLILLGIGAFLLVLKALYFGGVYDTWAPGGGDVRKITNLTLSPSVIFGYSLKSPFGGEGWIVSVDDLEDIIGGHVWLGSICILGGIWHILTKPFAWARRAFVWSGEAYLSYSLGALSVFGFIACCFVWFNNTAYPSEFYGPTGPEASQAQAFTFLVRDQRLGANVGSAQGPTGLGKYLMRSPTGEVIFGGETMRFWDLRAPWLEPLRGPNGLDLSRLKKDIQPWQERRSAEYMTHAPLGSLNSVGGVATEINAVNYVSPRSWLATSHFVLGFFLFVGHLWHAGRARAAAAGFEKGIDRDFEPVLSMTPLN.

Positions 1-14 (MKTLYSLRRFYHVE) are excised as a propeptide. T15 is modified (N-acetylthreonine). Position 15 is a phosphothreonine (T15). 5 consecutive transmembrane segments (helical) span residues 69 to 93 (LFEVAHFVPEKPMYEQGLILLPHLA), 134 to 155 (LLGPETLEESFPFFGYVWKDRN), 178 to 200 (KALYFGGVYDTWAPGGGDVRKIT), 255 to 275 (KPFAWARRAFVWSGEAYLSYS), and 291 to 312 (WFNNTAYPSEFYGPTGPEASQA). A [CaMn4O5] cluster-binding site is contributed by E367. Residues 447–471 (RARAAAAGFEKGIDRDFEPVLSMTP) form a helical membrane-spanning segment.

Belongs to the PsbB/PsbC family. PsbC subfamily. In terms of assembly, PSII is composed of 1 copy each of membrane proteins PsbA, PsbB, PsbC, PsbD, PsbE, PsbF, PsbH, PsbI, PsbJ, PsbK, PsbL, PsbM, PsbT, PsbX, PsbY, PsbZ, Psb30/Ycf12, at least 3 peripheral proteins of the oxygen-evolving complex and a large number of cofactors. It forms dimeric complexes. It depends on Binds multiple chlorophylls and provides some of the ligands for the Ca-4Mn-5O cluster of the oxygen-evolving complex. It may also provide a ligand for a Cl- that is required for oxygen evolution. PSII binds additional chlorophylls, carotenoids and specific lipids. as a cofactor.

It is found in the plastid. Its subcellular location is the chloroplast thylakoid membrane. One of the components of the core complex of photosystem II (PSII). It binds chlorophyll and helps catalyze the primary light-induced photochemical processes of PSII. PSII is a light-driven water:plastoquinone oxidoreductase, using light energy to abstract electrons from H(2)O, generating O(2) and a proton gradient subsequently used for ATP formation. This chain is Photosystem II CP43 reaction center protein, found in Chloranthus spicatus (Chulantree).